The primary structure comprises 152 residues: Superoxide dismutase [Cu-Zn] (152 aa).

Residue C7 is the site of S-palmitoyl cysteine attachment. H47, H49, and H64 together coordinate Cu cation. C58 and C146 are oxidised to a cystine. Zn(2+) is bound by residues H64, H72, H81, and D84. H120 contributes to the Cu cation binding site.

This sequence belongs to the Cu-Zn superoxide dismutase family. In terms of assembly, homodimer. Cu cation serves as cofactor. It depends on Zn(2+) as a cofactor.

It localises to the cytoplasm. Its subcellular location is the nucleus. The catalysed reaction is 2 superoxide + 2 H(+) = H2O2 + O2. Functionally, destroys radicals which are normally produced within the cells and which are toxic to biological systems. This is Superoxide dismutase [Cu-Zn] (sod1) from Xiphias gladius (Swordfish).